A 225-amino-acid chain; its full sequence is Proteasome activator 28 (225 aa).

The protein belongs to the PA28 family. Homoheptamer. The homoheptamer associates with the 20S proteasome.

The protein localises to the nucleus. Its function is as follows. Subunit of the 11S REG (also called PA28) proteasome regulator, a doughnut-shaped homoheptamer which associates with the proteasome. 11S REG-gamma activates preferentially the trypsin-like catalytic subunit of the proteasome. May also be involved in cell cycle regulation. The chain is Proteasome activator 28 (psmE3) from Dictyostelium discoideum (Social amoeba).